Here is a 577-residue protein sequence, read N- to C-terminus: Arginine--tRNA ligase (577 aa).

The short motif at 122 to 132 is the 'HIGH' region element; sequence PNVAKEMHVGH.

The protein belongs to the class-I aminoacyl-tRNA synthetase family. In terms of assembly, monomer.

It localises to the cytoplasm. The enzyme catalyses tRNA(Arg) + L-arginine + ATP = L-arginyl-tRNA(Arg) + AMP + diphosphate. This is Arginine--tRNA ligase from Salmonella schwarzengrund (strain CVM19633).